We begin with the raw amino-acid sequence, 395 residues long: MFKKLFTSESVTEGHPDKMCDQISDAILDAILEKDPAARVACETSVSTGLVLVAGEITTKCYVDIPKIVRKTIEEIGYTRAKYGFDSDTCAVLTAINEQSADIALGVDEALESKKGEHRDELEAIGAGDQGIMFGFACNETPELMPLPISLAHKLAKRLSDVRKDGTIGYLRPDGKTQVTVEYDGDKPVRVDTIVISTQHGPEVDAATIEKDMIEHVVQKIVPAELLDENTRYFINPTGRFVIGGPQGDAGLTGRKIIVDTYGGYARHGGGAFSGKDATKVDRSAAYAARYVAKNIVAAGLADKCEIELAYAIGVSRPISILVETFGTGKIAEADIAELIGKHFDLRPAAIIRDLGLRNPGYRNVAAYGHFGRADLDLTWERTDKAELLRKEAGL.

Residue His-15 coordinates ATP. Mg(2+) is bound at residue Asp-17. Glu-43 contributes to the K(+) binding site. Positions 56 and 99 each coordinate L-methionine. Residues 99–109 form a flexible loop region; the sequence is QSADIALGVDE. ATP-binding positions include 174 to 176, 240 to 241, Asp-249, 255 to 256, Ala-272, and Lys-276; these read DGK, RF, and RK. Residue Asp-249 participates in L-methionine binding. Lys-280 contacts L-methionine.

This sequence belongs to the AdoMet synthase family. As to quaternary structure, homotetramer; dimer of dimers. It depends on Mg(2+) as a cofactor. K(+) is required as a cofactor.

The protein resides in the cytoplasm. The catalysed reaction is L-methionine + ATP + H2O = S-adenosyl-L-methionine + phosphate + diphosphate. Its pathway is amino-acid biosynthesis; S-adenosyl-L-methionine biosynthesis; S-adenosyl-L-methionine from L-methionine: step 1/1. Its function is as follows. Catalyzes the formation of S-adenosylmethionine (AdoMet) from methionine and ATP. The overall synthetic reaction is composed of two sequential steps, AdoMet formation and the subsequent tripolyphosphate hydrolysis which occurs prior to release of AdoMet from the enzyme. In Alkaliphilus oremlandii (strain OhILAs) (Clostridium oremlandii (strain OhILAs)), this protein is S-adenosylmethionine synthase.